The primary structure comprises 39 residues: MASTGRIPLWLIATVGGTAALTVVGLFFYGSYSGVGSSL.

The helical transmembrane segment at 7–27 threads the bilayer; sequence IPLWLIATVGGTAALTVVGLF.

The protein belongs to the PsbJ family. PSII is composed of 1 copy each of membrane proteins PsbA, PsbB, PsbC, PsbD, PsbE, PsbF, PsbH, PsbI, PsbJ, PsbK, PsbL, PsbM, PsbT, PsbX, PsbY, PsbZ, Psb30/Ycf12, at least 3 peripheral proteins of the oxygen-evolving complex and a large number of cofactors. It forms dimeric complexes.

It is found in the plastid. Its subcellular location is the chloroplast thylakoid membrane. Its function is as follows. One of the components of the core complex of photosystem II (PSII). PSII is a light-driven water:plastoquinone oxidoreductase that uses light energy to abstract electrons from H(2)O, generating O(2) and a proton gradient subsequently used for ATP formation. It consists of a core antenna complex that captures photons, and an electron transfer chain that converts photonic excitation into a charge separation. The sequence is that of Photosystem II reaction center protein J from Rhodomonas salina (Cryptomonas salina).